The sequence spans 182 residues: uncharacterized protein (182 aa).

A Macro domain is found at 1-170; that stretch reads MIVKIIKGDI…IFVNIFEREL (170 aa).

This is an uncharacterized protein from Sulfurisphaera tokodaii (strain DSM 16993 / JCM 10545 / NBRC 100140 / 7) (Sulfolobus tokodaii).